Reading from the N-terminus, the 1270-residue chain is DNA-directed RNA polymerase subunit beta (1270 aa).

It belongs to the RNA polymerase beta chain family. In terms of assembly, the RNAP catalytic core consists of 2 alpha, 1 beta, 1 beta' and 1 omega subunit. When a sigma factor is associated with the core the holoenzyme is formed, which can initiate transcription.

The catalysed reaction is RNA(n) + a ribonucleoside 5'-triphosphate = RNA(n+1) + diphosphate. DNA-dependent RNA polymerase catalyzes the transcription of DNA into RNA using the four ribonucleoside triphosphates as substrates. The sequence is that of DNA-directed RNA polymerase subunit beta from Porphyromonas cangingivalis.